The sequence spans 279 residues: MADS-box transcription factor PHERES 1 (279 aa).

The 60-residue stretch at 1–60 (MRGKMKLSFIENDSVRKTTFTKRKKGMLKKFNELVTLCGVDACAVIRSPYNSIQEPWPSR) folds into the MADS-box domain.

In terms of assembly, interacts with AGL61/DIANA and AGL62. In terms of tissue distribution, male gametophyte, embryo and endosperm.

Its subcellular location is the nucleus. Functionally, probable transcription factor involved in the development of gametophytes and seeds. The chain is MADS-box transcription factor PHERES 1 (PHE1) from Arabidopsis thaliana (Mouse-ear cress).